Here is a 484-residue protein sequence, read N- to C-terminus: Suppressor of fused homolog (484 aa).

Residues methionine 1–serine 21 form a disordered region. Pro residues predominate over residues proline 12 to serine 21. Lysine 257 is covalently cross-linked (Glycyl lysine isopeptide (Lys-Gly) (interchain with G-Cter in ubiquitin)). The tract at residues serine 279 to leucine 360 is disordered. Serine 301 is modified (phosphoserine). An N6-acetyllysine modification is found at lysine 303. Lysine 321 is covalently cross-linked (Glycyl lysine isopeptide (Lys-Gly) (interchain with G-Cter in SUMO2)). The span at threonine 336–leucine 347 shows a compositional bias: basic and acidic residues. 3 positions are modified to phosphoserine: serine 342, serine 346, and serine 352. Residue threonine 353 is modified to Phosphothreonine. Serine 481 carries the phosphoserine modification.

It belongs to the SUFU family. May form homodimers. Interacts with ULK3; inactivating the protein kinase activity of ULK3. Interacts with RAB23. Part of a DNA-bound corepressor complex containing SAP18, GLI1 and SIN3. Part of a complex containing CTNNB1. Binds BTRC, GLI2, GLI3, SAP18 and STK36. Binds both free and DNA-bound GLI1. Interacts with KIF7. Interacts with GLI3FL and this interaction regulates the formation of either repressor or activator forms of GLI3. Its association with GLI3FL is regulated by Hh signaling and dissociation of the SUFU-GLI3 interaction requires the presence of the ciliary motor KIF3A. Polyubiquitinated at Lys-257 by the SCF(FBXL17) complex, leading to its subsequent degradation and allowing the release of GLI1 for proper hedgehog/smoothened signal transduction. Ubiquitination is impaired by phosphorylation at Ser-342, Ser-346, Ser-352 and Thr-353. In terms of processing, phosphorylation at Ser-342, Ser-346, Ser-352 and Thr-353 prevents ubiquitination by the SCF(FBXL17) complex. Widely expressed in adult and fetal tissues.

The protein resides in the cytoplasm. It is found in the nucleus. Its function is as follows. Negative regulator in the hedgehog/smoothened signaling pathway. Down-regulates GLI1-mediated transactivation of target genes. Part of a corepressor complex that acts on DNA-bound GLI1. May also act by linking GLI1 to BTRC and thereby targeting GLI1 to degradation by the proteasome. Sequesters GLI1, GLI2 and GLI3 in the cytoplasm, this effect is overcome by binding of STK36 to both SUFU and a GLI protein. Negative regulator of beta-catenin signaling. Regulates the formation of either the repressor form (GLI3R) or the activator form (GLI3A) of the full-length form of GLI3 (GLI3FL). GLI3FL is complexed with SUFU in the cytoplasm and is maintained in a neutral state. Without the Hh signal, the SUFU-GLI3 complex is recruited to cilia, leading to the efficient processing of GLI3FL into GLI3R. When Hh signaling is initiated, SUFU dissociates from GLI3FL and the latter translocates to the nucleus, where it is phosphorylated, destabilized, and converted to a transcriptional activator (GLI3A). Required for normal embryonic development. Required for the proper formation of hair follicles and the control of epidermal differentiation. This Mus musculus (Mouse) protein is Suppressor of fused homolog.